We begin with the raw amino-acid sequence, 942 residues long: Netrin receptor UNC5B-b (942 aa).

The N-terminal stretch at 1–30 is a signal peptide; sequence MYLSRIPGGAALAALLVALLLCCNFPPSIA. Residues 31 to 380 lie on the Extracellular side of the membrane; that stretch reads GIEYSDVLPD…LESTGDVALY (350 aa). The 98-residue stretch at 51–148 folds into the Ig-like domain; that stretch reads PHFLLEPEDA…AGTTKSKRSY (98 aa). 9 disulfide bridges follow: cysteine 72–cysteine 133, cysteine 84–cysteine 131, cysteine 177–cysteine 228, cysteine 261–cysteine 298, cysteine 265–cysteine 302, cysteine 276–cysteine 288, cysteine 317–cysteine 351, cysteine 321–cysteine 356, and cysteine 329–cysteine 341. The region spanning 150–245 is the Ig-like C2-type domain; the sequence is RIAYLRKNFD…KRRSTTATVI (96 aa). Asparagine 225 carries an N-linked (GlcNAc...) asparagine glycan. TSP type-1 domains are found at residues 249–303 and 305–357; these read NGGW…TMCP and DGGW…GLCM. An N-linked (GlcNAc...) asparagine glycan is attached at asparagine 350. The helical transmembrane segment at 381 to 401 threads the bilayer; sequence AGLVVAIFIIIILLMAVGIVV. At 402-942 the chain is on the cytoplasmic side; that stretch reads YRRNCREFDT…MLVMATDGDC (541 aa). Positions 541–684 constitute a ZU5 domain; it reads NSVTGTFGSL…LGTYAFVGES (144 aa). The segment at 687-835 is UPA domain; it reads RSAIKRLQLA…LEENVKSFDP (149 aa). The Death domain maps to 863 to 940; that stretch reads ICNSLDAPNS…EMMLVMATDG (78 aa).

It belongs to the unc-5 family. As to quaternary structure, interacts (via extracellular domain) with flrt3 (via extracellular domain). Interacts with rnd1.

It localises to the cell membrane. Plays a role in cell-cell adhesion during embryonic development. Receptor for netrin required for axon guidance. Mediates axon repulsion of neuronal growth cones in the developing nervous system upon ligand binding. This chain is Netrin receptor UNC5B-b, found in Xenopus laevis (African clawed frog).